The chain runs to 317 residues: MTTQLDALRNMTVVVADTGDIDAIKKYQPQDATTNPSLILSASSLPQYAPLIDEAIAYAKAKSADKTQQLIDAEDKLAVNIGLEILKIVPGRISTEVDARLSYDTQATVEKARKLIALYNEAGISNDRILIKIASTWQGIRAAEILEKEGINCNLTLLFSKAQARACAEAGVYLISPFVGRILDWYKANSDKKEYAPAEDPGVISVTKIYNYYKQYGYNTVVMGASFRNVGEITELAGCDRLTIAPALLKELQENSTALVRKLAFKGEVKAKPQPLTESQFYWQHNSDPMAVEKLADGIRKFAIDQEKLEKMLLEKF.

Lysine 132 functions as the Schiff-base intermediate with substrate in the catalytic mechanism.

Belongs to the transaldolase family. Type 1 subfamily. Homodimer.

It localises to the cytoplasm. It catalyses the reaction D-sedoheptulose 7-phosphate + D-glyceraldehyde 3-phosphate = D-erythrose 4-phosphate + beta-D-fructose 6-phosphate. The protein operates within carbohydrate degradation; pentose phosphate pathway; D-glyceraldehyde 3-phosphate and beta-D-fructose 6-phosphate from D-ribose 5-phosphate and D-xylulose 5-phosphate (non-oxidative stage): step 2/3. Transaldolase is important for the balance of metabolites in the pentose-phosphate pathway. The protein is Transaldolase of Histophilus somni (strain 2336) (Haemophilus somnus).